A 282-amino-acid chain; its full sequence is Phosphatidylglycerol--prolipoprotein diacylglyceryl transferase (282 aa).

The next 4 membrane-spanning stretches (helical) occupy residues 23–43 (IGPLAIHWYGLAYVAGILLGW), 71–91 (FIVWAALGVVLGGRLGYIFFY), 106–126 (IWNGGMSFHGGLTGTTIAMII), and 132–152 (GIPIWSLFDIVATVVPFGLFF). Arginine 154 is an a 1,2-diacyl-sn-glycero-3-phospho-(1'-sn-glycerol) binding site. A run of 3 helical transmembrane segments spans residues 189-209 (LYEAGLEGIVLLLVLAALVYG), 217-237 (GFITGVFVCGYALSRIFVEFF), and 252-272 (WLTMGMVLSSPMILLGLWAML).

Belongs to the Lgt family.

It localises to the cell inner membrane. The catalysed reaction is L-cysteinyl-[prolipoprotein] + a 1,2-diacyl-sn-glycero-3-phospho-(1'-sn-glycerol) = an S-1,2-diacyl-sn-glyceryl-L-cysteinyl-[prolipoprotein] + sn-glycerol 1-phosphate + H(+). It functions in the pathway protein modification; lipoprotein biosynthesis (diacylglyceryl transfer). In terms of biological role, catalyzes the transfer of the diacylglyceryl group from phosphatidylglycerol to the sulfhydryl group of the N-terminal cysteine of a prolipoprotein, the first step in the formation of mature lipoproteins. In Rhizobium leguminosarum bv. trifolii (strain WSM2304), this protein is Phosphatidylglycerol--prolipoprotein diacylglyceryl transferase.